The sequence spans 374 residues: Zinc finger CCCH domain-containing protein 15 homolog (374 aa).

2 consecutive C3H1-type zinc fingers follow at residues 89-116 and 167-197; these read DPKS…HDLA and YFLE…HCLP.

The protein belongs to the ZC3H15/TMA46 family.

The polypeptide is Zinc finger CCCH domain-containing protein 15 homolog (Caenorhabditis briggsae).